Consider the following 620-residue polypeptide: Glutathione-regulated potassium-efflux system protein KefC (620 aa).

Residues 1–3 (MDS) are Periplasmic-facing. The helical transmembrane segment at 4–24 (HTLIQALIYLGSAALIVPIAV) threads the bilayer. Residue Arg25 is a topological domain, cytoplasmic. Residues 26–46 (LGLGSVLGYLIAGCIIGPWGL) form a helical membrane-spanning segment. At 47 to 53 (RLVTDAE) the chain is on the periplasmic side. Residues 54 to 74 (SILHFAEIGVVLMLFIIGLEL) traverse the membrane as a helical segment. Residues 75 to 89 (DPQRLWKLRAAVFGG) lie on the Cytoplasmic side of the membrane. The chain crosses the membrane as a helical span at residues 90–110 (GALQMVICGGLLGLFCMLLGL). Residues 111–113 (RWQ) lie on the Periplasmic side of the membrane. The helical transmembrane segment at 114-134 (VAELIGMTLALSSTAIAMQAM) threads the bilayer. Residues 135 to 148 (NERNLMVTQMGRSA) are Cytoplasmic-facing. Residues 149–169 (FAVLLFQDIAAIPLVAMIPLL) traverse the membrane as a helical segment. At 170–177 (AASSASTT) the chain is on the periplasmic side. Residues 178 to 198 (MGAFVLSALKVAGALALVVLL) form a helical membrane-spanning segment. The Cytoplasmic segment spans residues 199-213 (GRYVTRPALRFVARS). The helical transmembrane segment at 214–233 (GLREVFSAVALFLVFGFGLL) threads the bilayer. Topologically, residues 234 to 236 (LEE) are periplasmic. A helical transmembrane segment spans residues 237–254 (VGLSMAMGAFLAGVLLAS). At 255-269 (SEYRHALESDIEPFK) the chain is on the cytoplasmic side. The chain crosses the membrane as a helical span at residues 270–290 (GLLLGLFFIGVGMSIDFGTLL). Residues 291-293 (ENP) lie on the Periplasmic side of the membrane. The chain crosses the membrane as a helical span at residues 294 to 314 (LRIVILLLGFLIIKIAMLWLI). Over 315 to 326 (ARPLQVPNKQRR) the chain is Cytoplasmic. The helical transmembrane segment at 327-347 (WFAVLLGQGSEFAFVVFGAAQ) threads the bilayer. Over 348-358 (MANVLEPEWAK) the chain is Periplasmic. A helical membrane pass occupies residues 359–379 (SLTLAVALSMAATPILLVILN). At 380-620 (RLEQSSTEEA…ADEPETKPSS (241 aa)) the chain is on the cytoplasmic side. The 120-residue stretch at 399–518 (QPRVIIAGFG…AGVEKPERET (120 aa)) folds into the RCK N-terminal domain. The disordered stretch occupies residues 597–620 (GWQGTEEGKHTGNMADEPETKPSS).

Belongs to the monovalent cation:proton antiporter 2 (CPA2) transporter (TC 2.A.37) family. KefC subfamily. In terms of assembly, homodimer. Interacts with the regulatory subunit KefF.

The protein localises to the cell inner membrane. In terms of biological role, pore-forming subunit of a potassium efflux system that confers protection against electrophiles. Catalyzes K(+)/H(+) antiport. This Escherichia coli O6:H1 (strain CFT073 / ATCC 700928 / UPEC) protein is Glutathione-regulated potassium-efflux system protein KefC.